Reading from the N-terminus, the 478-residue chain is Cysteine protease ATG4B (478 aa).

Residues 1–15 (MTSLPDRGVSSSSSD) are compositionally biased toward polar residues. The tract at residues 1–20 (MTSLPDRGVSSSSSDPLCEG) is disordered. Residue cysteine 164 is the Nucleophile of the active site. Residues aspartate 361 and histidine 363 contribute to the active site.

The protein belongs to the peptidase C54 family. Interacts with ATG8. Constitutively expressed.

The protein resides in the cytoplasm. It catalyses the reaction [protein]-C-terminal L-amino acid-glycyl-phosphatidylethanolamide + H2O = [protein]-C-terminal L-amino acid-glycine + a 1,2-diacyl-sn-glycero-3-phosphoethanolamine. Functionally, cysteine protease that plays a key role in autophagy by mediating both proteolytic activation and delipidation of ATG8 family proteins. The protease activity is required for proteolytic activation of ATG8 family proteins: cleaves the C-terminal amino acid of ATG8 proteins to reveal a C-terminal glycine. Exposure of the glycine at the C-terminus is essential for ATG8 proteins conjugation to phosphatidylethanolamine (PE) and insertion to membranes, which is necessary for autophagy. In addition to the protease activity, also mediates delipidation of PE-conjugated ATG8 proteins. The sequence is that of Cysteine protease ATG4B (ATG4B) from Oryza sativa subsp. indica (Rice).